The sequence spans 213 residues: Large ribosomal subunit protein uL1 (213 aa).

This sequence belongs to the universal ribosomal protein uL1 family. Part of the 50S ribosomal subunit.

Its function is as follows. Binds directly to 23S rRNA. Probably involved in E site tRNA release. Functionally, protein L1 is also a translational repressor protein, it controls the translation of its operon by binding to its mRNA. The polypeptide is Large ribosomal subunit protein uL1 (Methanococcoides burtonii (strain DSM 6242 / NBRC 107633 / OCM 468 / ACE-M)).